The primary structure comprises 805 residues: Leucine--tRNA ligase (805 aa).

The 'HIGH' region motif lies at 39–50 (PYPSGKGLHVGH). Positions 583-587 (KMSKS) match the 'KMSKS' region motif. Lys-586 lines the ATP pocket.

This sequence belongs to the class-I aminoacyl-tRNA synthetase family.

The protein localises to the cytoplasm. It catalyses the reaction tRNA(Leu) + L-leucine + ATP = L-leucyl-tRNA(Leu) + AMP + diphosphate. This Mycoplasmoides gallisepticum (strain R(low / passage 15 / clone 2)) (Mycoplasma gallisepticum) protein is Leucine--tRNA ligase.